The following is a 508-amino-acid chain: Aldehyde dehydrogenase family 7 member A1 (508 aa).

An NAD(+)-binding site is contributed by Gly244–Gly249. Glu266 (proton acceptor) is an active-site residue. Catalysis depends on Cys300, which acts as the Nucleophile.

It belongs to the aldehyde dehydrogenase family. In terms of assembly, homotetramer.

It catalyses the reaction an aldehyde + NAD(+) + H2O = a carboxylate + NADH + 2 H(+). The sequence is that of Aldehyde dehydrogenase family 7 member A1 from Pisum sativum (Garden pea).